Reading from the N-terminus, the 426-residue chain is Cytochrome c biogenesis protein Ccs1 (426 aa).

Helical transmembrane passes span 11–31 (LKFA…GSII), 70–90 (NFWF…CTFF), and 153–173 (IAPV…IFAS).

The protein belongs to the Ccs1/CcsB family. In terms of assembly, may interact with CcsA.

It localises to the plastid. The protein localises to the chloroplast thylakoid membrane. Functionally, required during biogenesis of c-type cytochromes (cytochrome c6 and cytochrome f) at the step of heme attachment. The protein is Cytochrome c biogenesis protein Ccs1 of Heterosigma akashiwo (strain CCMP452 / OLISTH).